Reading from the N-terminus, the 856-residue chain is DNA endonuclease RBBP8 (856 aa).

The tract at residues 25 to 48 (ELWSKLKECHDKDLQELLMKIGKL) is essential for binding to the MRN complex and for RPA focus formation on DNA damage. Coiled-coil stretches lie at residues 38–87 (LQEL…EDRL) and 120–141 (ITEL…SEQL). 2 disordered regions span residues 143 to 174 (DMQK…DSPL) and 423 to 456 (DSEQ…DKEN). Over residues 156–168 (ENPADTGDGEDGV) the composition is skewed to acidic residues. A damage-recruitment motif region spans residues 493–515 (SSSRTKLTISLVPEKPDTKTILH). Positions 695 to 732 (SPSQSISCKERSDIPSIENKKITSEKEHESKGEPYQKQ) are disordered. Residues 702 to 730 (CKERSDIPSIENKKITSEKEHESKGEPYQ) are compositionally biased toward basic and acidic residues. At T806 the chain carries Phosphothreonine. A Phosphothreonine; by ATR modification is found at T818.

This sequence belongs to the COM1/SAE2/CtIP family. As to quaternary structure, homotetramer; formed by antiparallel association of helical extensions protruding from the N-termini of two parallel coiled-coil dimers. Interacts with the MRN complex; the interaction links DNA sensing to resection. Interacts with samhd1. In terms of processing, phosphorylation at Thr-818 by atr promotes recruitment to double-strand breaks (DSBs).

The protein localises to the nucleus. Its subcellular location is the chromosome. Endonuclease that cooperates with the MRE11-RAD50-NBN (MRN) complex in DNA-end resection, the first step of double-strand break (DSB) repair through the homologous recombination (HR) pathway. Functions downstream of the MRN complex and ATM, promotes ATR activation and its recruitment to DSBs in the S/G2 phase facilitating the generation of ssDNA. Specifically promotes the endonuclease activity of the MRN complex to clear DNA ends containing protein adducts: recruited to DSBs by nbn following phosphorylation, and promotes the endonuclease of mre11 to clear protein-DNA adducts and generate clean double-strand break ends. The MRN complex and rbbp8/CtIP are also required for chromosome alignment during metaphase. This chain is DNA endonuclease RBBP8 (rbbp8), found in Xenopus laevis (African clawed frog).